We begin with the raw amino-acid sequence, 429 residues long: Histidine--tRNA ligase (429 aa).

It belongs to the class-II aminoacyl-tRNA synthetase family. In terms of assembly, homodimer.

It is found in the cytoplasm. The catalysed reaction is tRNA(His) + L-histidine + ATP = L-histidyl-tRNA(His) + AMP + diphosphate + H(+). This Streptococcus mutans serotype c (strain ATCC 700610 / UA159) protein is Histidine--tRNA ligase.